A 376-amino-acid chain; its full sequence is Putative aryl-alcohol dehydrogenase AAD14 (376 aa).

The active-site Proton donor is the tyrosine 76. Substrate is bound at residue histidine 151. 236 to 246 (DVMGGGRFQSK) lines the NADP(+) pocket.

It belongs to the aldo/keto reductase family. Aldo/keto reductase 2 subfamily.

This is Putative aryl-alcohol dehydrogenase AAD14 (AAD14) from Saccharomyces cerevisiae (strain ATCC 204508 / S288c) (Baker's yeast).